Reading from the N-terminus, the 336-residue chain is Holliday junction branch migration complex subunit RuvB (336 aa).

Positions 1–182 are large ATPase domain (RuvB-L); that stretch reads MKERIVNLET…FGMSFRMQFY (182 aa). ATP contacts are provided by residues leucine 21, arginine 22, glycine 63, lysine 66, threonine 67, serine 68, 129 to 131, arginine 172, tyrosine 182, and arginine 219; that span reads EDF. Threonine 67 lines the Mg(2+) pocket. The segment at 183 to 253 is small ATPAse domain (RuvB-S); the sequence is SPSELALIIK…ITLHALNELG (71 aa). A head domain (RuvB-H) region spans residues 256-336; sequence ELGFDEADLA…IPTLKSQTLF (81 aa). The DNA site is built by arginine 310 and arginine 315.

It belongs to the RuvB family. In terms of assembly, homohexamer. Forms an RuvA(8)-RuvB(12)-Holliday junction (HJ) complex. HJ DNA is sandwiched between 2 RuvA tetramers; dsDNA enters through RuvA and exits via RuvB. An RuvB hexamer assembles on each DNA strand where it exits the tetramer. Each RuvB hexamer is contacted by two RuvA subunits (via domain III) on 2 adjacent RuvB subunits; this complex drives branch migration. In the full resolvosome a probable DNA-RuvA(4)-RuvB(12)-RuvC(2) complex forms which resolves the HJ.

The protein localises to the cytoplasm. The catalysed reaction is ATP + H2O = ADP + phosphate + H(+). Functionally, the RuvA-RuvB-RuvC complex processes Holliday junction (HJ) DNA during genetic recombination and DNA repair, while the RuvA-RuvB complex plays an important role in the rescue of blocked DNA replication forks via replication fork reversal (RFR). RuvA specifically binds to HJ cruciform DNA, conferring on it an open structure. The RuvB hexamer acts as an ATP-dependent pump, pulling dsDNA into and through the RuvAB complex. RuvB forms 2 homohexamers on either side of HJ DNA bound by 1 or 2 RuvA tetramers; 4 subunits per hexamer contact DNA at a time. Coordinated motions by a converter formed by DNA-disengaged RuvB subunits stimulates ATP hydrolysis and nucleotide exchange. Immobilization of the converter enables RuvB to convert the ATP-contained energy into a lever motion, pulling 2 nucleotides of DNA out of the RuvA tetramer per ATP hydrolyzed, thus driving DNA branch migration. The RuvB motors rotate together with the DNA substrate, which together with the progressing nucleotide cycle form the mechanistic basis for DNA recombination by continuous HJ branch migration. Branch migration allows RuvC to scan DNA until it finds its consensus sequence, where it cleaves and resolves cruciform DNA. The sequence is that of Holliday junction branch migration complex subunit RuvB from Helicobacter pylori (strain G27).